A 311-amino-acid chain; its full sequence is CD-NTase-associated protein 6 (311 aa).

ATP is bound by residues 84–89 (GSGKTE) and 215–216 (RR).

This sequence belongs to the AAA ATPase family. In terms of assembly, homohexamer. Forms a 1:1:6 CdnC:Cap7:Cap6 complex.

Regulates complex assembly in a CBASS antivirus system. CBASS (cyclic oligonucleotide-based antiphage signaling system) provides immunity against bacteriophage. The CD-NTase protein synthesizes cyclic nucleotides in response to infection; these serve as specific second messenger signals. The signals activate a diverse range of effectors, leading to bacterial cell death and thus abortive phage infection. A type III-C(AAA) CBASS system. In terms of biological role, binds and disassembles an active CdnC:Cap7 (Cap7 is also called HORMA) complex, inhibiting the complex's ability to synthesize cyclic nucleotide second messengers. An AAA+-ATPase remodeler, in the absence of foreign threat Cap6 (also called Trip13) probably maintains the Cap7 protein in its open, inactive state. Once activated (presumably by a bacteriophage protein) Cap7 binds to and activates its cognate CD-NTase (CdnC in this bacteria) to synthesize cAAA, a cyclic nucleotide second messenger. cAAA activates the NucC endonuclease which degrades all DNA in the infected cell, causing cell death and abortive phage infection. Functionally, protects E.coli strain JP313 against bacteriophage lambda cI- infection. When the cdnC-cap7-cap6-nucC operon is transformed into a susceptible E.coli strain it confers bacteriophage lambda cI- immunity. Mutations in the sensor (Cap7 also called HORMA) or effector proteins (CdnC, NucC) but not the disassembly protein (Cap6 also called Trip13) no longer confer immunity. The presence of the intact operon leads to culture collapse and cell death, which occurs before the phage has finished its replication cycle, thus protecting non-infected bacteria by aborting the phage infection and preventing its propagation. In Escherichia coli (strain MS 115-1), this protein is CD-NTase-associated protein 6.